A 427-amino-acid polypeptide reads, in one-letter code: Ectonucleoside triphosphate diphosphohydrolase 5 (427 aa).

An N-terminal signal peptide occupies residues 1-24 (MATSWGAVFMLIIACVGSTVFYRE). Glu-171 (proton acceptor) is an active-site residue. Asn-231 carries an N-linked (GlcNAc...) asparagine glycan. 2 disulfides stabilise this stretch: Cys-271–Cys-302 and Cys-362–Cys-376.

It belongs to the GDA1/CD39 NTPase family. As to quaternary structure, monomer; active form. Homodimer; disulfide-linked. Homodimers are enzymatically inactive. Ca(2+) is required as a cofactor. It depends on Mg(2+) as a cofactor. In terms of processing, N-glycosylated; high-mannose type. As to expression, ubiquitous.

It is found in the endoplasmic reticulum. It localises to the secreted. The catalysed reaction is a ribonucleoside 5'-diphosphate + H2O = a ribonucleoside 5'-phosphate + phosphate + H(+). The enzyme catalyses GDP + H2O = GMP + phosphate + H(+). It catalyses the reaction UDP + H2O = UMP + phosphate + H(+). It carries out the reaction IDP + H2O = IMP + phosphate + H(+). The catalysed reaction is CDP + H2O = CMP + phosphate + H(+). The enzyme catalyses ADP + H2O = AMP + phosphate + H(+). The protein operates within protein modification; protein glycosylation. In terms of biological role, hydrolyzes nucleoside diphosphates with a preference for GDP, IDP and UDP compared to ADP and CDP. In the lumen of the endoplasmic reticulum, hydrolyzes UDP that acts as an end-product feedback inhibitor of the UDP-Glc:glycoprotein glucosyltransferases. UMP can be transported back by an UDP-sugar antiporter to the cytosol where it is consumed to regenerate UDP-glucose. Therefore, it positively regulates protein reglucosylation by clearing UDP from the ER lumen and by promoting the regeneration of UDP-glucose. Protein reglucosylation is essential to proper glycoprotein folding and quality control in the ER. In Mus musculus (Mouse), this protein is Ectonucleoside triphosphate diphosphohydrolase 5 (Entpd5).